We begin with the raw amino-acid sequence, 449 residues long: MPATLLRAVAGSHRVLSKAHQCRRIGHLMLKPLKEFENTTCSTLAIRQNLDLFLPDKTAGGLNKSQILEMNQKKSDTSMLSPLNAAHYQDEKAHLPTMKSFGTHRRVTHKPDLLDSKWFIKILKRHFSSVSTETLVPKQDFPQMKRPLKASRTRQPSGTNLPVVSVNEDLMHCTAFATADEYHLGNLSQDLASHGYVEVTSLPRDAANILVMGVENSAKEGDPGTIFFFREGAAVFWNVKDKTMKHVMKVLEKHEIQPYEIALVHWENEELNYIKIEGQSKLHRGEIKLNSELDLDDAILEKFAFSNALCLSVKLAIWEASLDKFIESIQSIPEALKAGKKVKLSHEEVMQKIGELFALRHRINLSSDFLITPDFYWDRENLEGLYDKTCQFLSIGRRVKVMNEKLQHCMEPTDLMRNHLNEKRALRLEWMIVILITIEVMFELGRVFF.

A mitochondrion-targeting transit peptide spans 1-16 (MPATLLRAVAGSHRVL).

Belongs to the RMD1/sif2 family. As to quaternary structure, homooligomer.

It localises to the mitochondrion. Required for mitochondrial translation, possibly by coordinating the assembly or maintenance of the mitochondrial ribosome. The sequence is that of Required for meiotic nuclear division protein 1 homolog (RMND1) from Pongo abelii (Sumatran orangutan).